Consider the following 512-residue polypeptide: Glutathione-binding protein GsiB (512 aa).

An N-terminal signal peptide occupies residues 1–26 (MARAVHRSGLVALGIATALMASCAFA).

Belongs to the bacterial solute-binding protein 5 family. In terms of assembly, the complex is composed of two ATP-binding proteins (GsiA), two transmembrane proteins (GsiC and GsiD) and a solute-binding protein (GsiB).

The protein localises to the periplasm. Functionally, part of the ABC transporter complex GsiABCD involved in glutathione import. Binds glutathione. The sequence is that of Glutathione-binding protein GsiB from Escherichia coli O6:K15:H31 (strain 536 / UPEC).